A 29-amino-acid chain; its full sequence is Cytochrome b6-f complex subunit 8 (29 aa).

A helical membrane pass occupies residues 3 to 23 (TVSIAWAALMVIFTFSISLVV).

It belongs to the PetN family. In terms of assembly, the 4 large subunits of the cytochrome b6-f complex are cytochrome b6, subunit IV (17 kDa polypeptide, PetD), cytochrome f and the Rieske protein, while the 4 small subunits are PetG, PetL, PetM and PetN. The complex functions as a dimer.

It is found in the plastid. The protein localises to the chloroplast thylakoid membrane. In terms of biological role, component of the cytochrome b6-f complex, which mediates electron transfer between photosystem II (PSII) and photosystem I (PSI), cyclic electron flow around PSI, and state transitions. This Psilotum nudum (Whisk fern) protein is Cytochrome b6-f complex subunit 8.